Reading from the N-terminus, the 229-residue chain is Heptaprenylglyceryl phosphate synthase (229 aa).

Lys12 contributes to the sn-glycerol 1-phosphate binding site. Mg(2+) is bound by residues Asp14 and Thr40. Sn-glycerol 1-phosphate contacts are provided by residues 159-164, Gly189, and 209-210; these read YIEYSG and GN.

This sequence belongs to the GGGP/HepGP synthase family. Group I subfamily. In terms of assembly, homodimer. The cofactor is Mg(2+).

It carries out the reaction sn-glycerol 1-phosphate + all-trans-heptaprenyl diphosphate = 3-heptaprenyl-sn-glycero-1-phosphate + diphosphate. It functions in the pathway membrane lipid metabolism; glycerophospholipid metabolism. Functionally, prenyltransferase that catalyzes in vivo the transfer of the heptaprenyl moiety of heptaprenyl pyrophosphate (HepPP; 35 carbon atoms) to the C3 hydroxyl of sn-glycerol-1-phosphate (G1P), producing heptaprenylglyceryl phosphate (HepGP). This reaction is an ether-bond-formation step in the biosynthesis of archaea-type G1P-based membrane lipids found in Bacillales. The chain is Heptaprenylglyceryl phosphate synthase from Oceanobacillus iheyensis (strain DSM 14371 / CIP 107618 / JCM 11309 / KCTC 3954 / HTE831).